The chain runs to 344 residues: L-rhamnose-proton symporter (344 aa).

A run of 10 helical transmembrane segments spans residues 4 to 24, 38 to 58, 68 to 88, 101 to 121, 137 to 157, 175 to 195, 214 to 234, 259 to 279, 290 to 310, and 321 to 341; these read AITMGIFWHLIGAASAACFYA, WSVGGIVSWLILPWTISALLL, FNLSTLLPVFLFGAMWGIGNI, MGIGIAIGITLIVGTLMTPII, TLLGVFVALIGVGIVTRAGQL, LLLAVMCGIFSAGMSFAMNAA, LPSYVVIMGGGALVNLGFCFI, ILLSALGGLMWYLQFFFYAWG, MSWMLHMSFYVLCGGLVGLVL, and VAVLSLGCVVIIIAANIVGLG.

This sequence belongs to the L-rhamnose transporter (TC 2.A.7.6) family.

It localises to the cell inner membrane. The enzyme catalyses L-rhamnopyranose(in) + H(+)(in) = L-rhamnopyranose(out) + H(+)(out). Its function is as follows. Uptake of L-rhamnose across the cytoplasmic membrane with the concomitant transport of protons into the cell (symport system). This chain is L-rhamnose-proton symporter, found in Salmonella agona (strain SL483).